The sequence spans 362 residues: Protein RecA (362 aa).

77–84 (GPESSGKT) serves as a coordination point for ATP.

Belongs to the RecA family.

Its subcellular location is the cytoplasm. In terms of biological role, can catalyze the hydrolysis of ATP in the presence of single-stranded DNA, the ATP-dependent uptake of single-stranded DNA by duplex DNA, and the ATP-dependent hybridization of homologous single-stranded DNAs. It interacts with LexA causing its activation and leading to its autocatalytic cleavage. The polypeptide is Protein RecA (Nitrobacter winogradskyi (strain ATCC 25391 / DSM 10237 / CIP 104748 / NCIMB 11846 / Nb-255)).